We begin with the raw amino-acid sequence, 141 residues long: Putative pre-16S rRNA nuclease (141 aa).

This sequence belongs to the YqgF nuclease family.

The protein localises to the cytoplasm. In terms of biological role, could be a nuclease involved in processing of the 5'-end of pre-16S rRNA. The polypeptide is Putative pre-16S rRNA nuclease (Aliivibrio salmonicida (strain LFI1238) (Vibrio salmonicida (strain LFI1238))).